The sequence spans 249 residues: Transmembrane protein 51 (249 aa).

A run of 2 helical transmembrane segments spans residues 17–37 and 64–84; these read IGLG…VPGF and VAYV…CLSI. 3 disordered regions span residues 95 to 126, 161 to 199, and 213 to 249; these read ELAR…SRYY, TGLD…PLKV, and RITL…RPPD. Over residues 99–108 the composition is skewed to polar residues; sequence IQQQAGTVPH. 4 positions are modified to phosphoserine: Ser-109, Ser-114, Ser-178, and Ser-188. The span at 167-178 shows a compositional bias: polar residues; it reads TPTSTRAETETS. The span at 190 to 199 shows a compositional bias: basic residues; it reads LAKRLKPLKV. A compositionally biased stretch (pro residues) spans 220 to 234; the sequence is NVPPPSIEPLTPPPL.

Its subcellular location is the membrane. The polypeptide is Transmembrane protein 51 (Tmem51) (Mus musculus (Mouse)).